A 385-amino-acid chain; its full sequence is Protein pelota homolog (385 aa).

Lys162 is covalently cross-linked (Glycyl lysine isopeptide (Lys-Gly) (interchain with G-Cter in SUMO2)). Phosphoserine occurs at positions 374, 380, 381, and 382.

This sequence belongs to the eukaryotic release factor 1 family. Pelota subfamily. Component of the Pelota-HBS1L complex, also named Dom34-Hbs1 complex, composed of PELO and HBS1L. Interacts with PINK1. Interacts with ABCE1. Interacts with CNOT4. A divalent metal cation serves as cofactor.

Its subcellular location is the cytoplasm. Functionally, component of the Pelota-HBS1L complex, a complex that recognizes stalled ribosomes and triggers the No-Go Decay (NGD) pathway. In the Pelota-HBS1L complex, PELO recognizes ribosomes stalled at the 3' end of an mRNA and engages stalled ribosomes by destabilizing mRNA in the mRNA channel. Following mRNA extraction from stalled ribosomes by the SKI complex, the Pelota-HBS1L complex promotes recruitment of ABCE1, which drives the disassembly of stalled ribosomes, followed by degradation of damaged mRNAs as part of the NGD pathway. As part of the PINK1-regulated signaling, upon mitochondrial damage is recruited to the ribosome/mRNA-ribonucleoprotein complex associated to mitochondrial outer membrane thereby enabling the recruitment of autophagy receptors and induction of mitophagy. This is Protein pelota homolog (Pelo) from Rattus norvegicus (Rat).